The primary structure comprises 321 residues: UPF0026 protein MJ1312 (321 aa).

Residues Arg-11–Asn-236 enclose the Radical SAM core domain. Residues Cys-27, Cys-31, and Cys-34 each coordinate [4Fe-4S] cluster.

The protein belongs to the UPF0026 family. [4Fe-4S] cluster serves as cofactor.

This Methanocaldococcus jannaschii (strain ATCC 43067 / DSM 2661 / JAL-1 / JCM 10045 / NBRC 100440) (Methanococcus jannaschii) protein is UPF0026 protein MJ1312.